Here is a 490-residue protein sequence, read N- to C-terminus: Type I restriction enzyme EcoEI methylase subunit (490 aa).

S-adenosyl-L-methionine contacts are provided by residues 163-168 (EFYTPR), 193-195 (TGG), and glutamate 226.

This sequence belongs to the N(4)/N(6)-methyltransferase family. The type I restriction/modification system is composed of three polypeptides R, M and S; the restriction enzyme has stoichiometry R(2)M(2)S(1) while the methyltransferase is M(2)S(1).

It catalyses the reaction a 2'-deoxyadenosine in DNA + S-adenosyl-L-methionine = an N(6)-methyl-2'-deoxyadenosine in DNA + S-adenosyl-L-homocysteine + H(+). Its function is as follows. The subtype gamma methyltransferase (M) subunit of a type I restriction enzyme. The M and S subunits together form a methyltransferase (MTase) that methylates two adenine residues of the sequence 5'-GAGN(7)ATGC-3'. In the presence of the R subunit the complex can also act as an endonuclease, binding to the same target sequence but cutting the DNA some distance from this site. Whether the DNA is cut or modified depends on the methylation state of the target sequence. When the target site is unmodified, the DNA is cut. When the target site is hemimethylated, the complex acts as a maintenance MTase modifying the DNA so that both strands become methylated. After locating a non-methylated recognition site, the enzyme complex serves as a molecular motor that translocates DNA in an ATP-dependent manner until a collision occurs that triggers cleavage. The polypeptide is Type I restriction enzyme EcoEI methylase subunit (hsdM) (Escherichia coli).